Consider the following 334-residue polypeptide: Holliday junction branch migration complex subunit RuvB (334 aa).

The interval Ala4–Tyr186 is large ATPase domain (RuvB-L). Residues Ile25, Arg26, Gly67, Lys70, Thr71, Thr72, Glu133–Tyr135, Arg176, Tyr186, and Arg223 contribute to the ATP site. Thr71 is a binding site for Mg(2+). Residues Lys187–Asp257 form a small ATPAse domain (RuvB-S) region. The segment at Ser260–Lys334 is head domain (RuvB-H). Positions 315 and 320 each coordinate DNA.

The protein belongs to the RuvB family. In terms of assembly, homohexamer. Forms an RuvA(8)-RuvB(12)-Holliday junction (HJ) complex. HJ DNA is sandwiched between 2 RuvA tetramers; dsDNA enters through RuvA and exits via RuvB. An RuvB hexamer assembles on each DNA strand where it exits the tetramer. Each RuvB hexamer is contacted by two RuvA subunits (via domain III) on 2 adjacent RuvB subunits; this complex drives branch migration. In the full resolvosome a probable DNA-RuvA(4)-RuvB(12)-RuvC(2) complex forms which resolves the HJ.

Its subcellular location is the cytoplasm. It catalyses the reaction ATP + H2O = ADP + phosphate + H(+). Functionally, the RuvA-RuvB-RuvC complex processes Holliday junction (HJ) DNA during genetic recombination and DNA repair, while the RuvA-RuvB complex plays an important role in the rescue of blocked DNA replication forks via replication fork reversal (RFR). RuvA specifically binds to HJ cruciform DNA, conferring on it an open structure. The RuvB hexamer acts as an ATP-dependent pump, pulling dsDNA into and through the RuvAB complex. RuvB forms 2 homohexamers on either side of HJ DNA bound by 1 or 2 RuvA tetramers; 4 subunits per hexamer contact DNA at a time. Coordinated motions by a converter formed by DNA-disengaged RuvB subunits stimulates ATP hydrolysis and nucleotide exchange. Immobilization of the converter enables RuvB to convert the ATP-contained energy into a lever motion, pulling 2 nucleotides of DNA out of the RuvA tetramer per ATP hydrolyzed, thus driving DNA branch migration. The RuvB motors rotate together with the DNA substrate, which together with the progressing nucleotide cycle form the mechanistic basis for DNA recombination by continuous HJ branch migration. Branch migration allows RuvC to scan DNA until it finds its consensus sequence, where it cleaves and resolves cruciform DNA. The protein is Holliday junction branch migration complex subunit RuvB of Vibrio vulnificus (strain YJ016).